A 132-amino-acid polypeptide reads, in one-letter code: Small ribosomal subunit protein uS9 (132 aa).

The interval 101 to 132 (KRAGLLTRDPRMKERKKPGLKAARRSPQFSKR) is disordered. Positions 113-132 (KERKKPGLKAARRSPQFSKR) are enriched in basic residues.

Belongs to the universal ribosomal protein uS9 family.

In Staphylococcus aureus (strain USA300), this protein is Small ribosomal subunit protein uS9.